The following is a 210-amino-acid chain: UMP-CMP kinase 3 (210 aa).

Residue 34 to 39 (GSGKGT) coordinates ATP. Positions 54–83 (SAGDLLRAEIKSGSENGTMIENMIKEGKIV) are NMP. Residues Arg-60, 81–83 (KIV), and 108–111 (GFPR) each bind a ribonucleoside 5'-phosphate. Asn-115 provides a ligand contact to CMP. Positions 146 to 154 (GRNQGRVDD) are LID. Arg-147 serves as a coordination point for ATP. The a ribonucleoside 5'-phosphate site is built by Arg-151 and Arg-162. Lys-190 contributes to the ATP binding site.

It belongs to the adenylate kinase family. UMP-CMP kinase subfamily. Monomer. Requires Mg(2+) as cofactor.

Its subcellular location is the cytoplasm. It localises to the nucleus. It carries out the reaction UMP + ATP = UDP + ADP. The catalysed reaction is CMP + ATP = CDP + ADP. The enzyme catalyses dCMP + ATP = dCDP + ADP. Its function is as follows. Catalyzes the phosphorylation of pyrimidine nucleoside monophosphates at the expense of ATP. Plays an important role in de novo pyrimidine nucleotide biosynthesis. Has preference for UMP and CMP as phosphate acceptors. This chain is UMP-CMP kinase 3 (URA6), found in Oryza sativa subsp. japonica (Rice).